Consider the following 206-residue polypeptide: Proteasome subunit beta 2 (206 aa).

Positions 1–10 (MLHLKEKLKG) are cleaved as a propeptide — removed in mature form; by autocatalysis. The Nucleophile role is filled by T11.

It belongs to the peptidase T1B family. The 20S proteasome core is composed of 14 alpha and 14 beta subunits that assemble into four stacked heptameric rings, resulting in a barrel-shaped structure. The two inner rings, each composed of seven catalytic beta subunits, are sandwiched by two outer rings, each composed of seven alpha subunits. The catalytic chamber with the active sites is on the inside of the barrel. Has a gated structure, the ends of the cylinder being occluded by the N-termini of the alpha-subunits. Is capped at one or both ends by the proteasome regulatory ATPase, PAN.

The protein resides in the cytoplasm. It carries out the reaction Cleavage of peptide bonds with very broad specificity.. Its activity is regulated as follows. The formation of the proteasomal ATPase PAN-20S proteasome complex, via the docking of the C-termini of PAN into the intersubunit pockets in the alpha-rings, triggers opening of the gate for substrate entry. Interconversion between the open-gate and close-gate conformations leads to a dynamic regulation of the 20S proteasome proteolysis activity. Functionally, component of the proteasome core, a large protease complex with broad specificity involved in protein degradation. The polypeptide is Proteasome subunit beta 2 (Pyrococcus furiosus (strain ATCC 43587 / DSM 3638 / JCM 8422 / Vc1)).